We begin with the raw amino-acid sequence, 297 residues long: tRNA pseudouridine synthase B (297 aa).

Residue D44 is the Nucleophile of the active site.

This sequence belongs to the pseudouridine synthase TruB family. Type 1 subfamily.

It catalyses the reaction uridine(55) in tRNA = pseudouridine(55) in tRNA. Responsible for synthesis of pseudouridine from uracil-55 in the psi GC loop of transfer RNAs. The chain is tRNA pseudouridine synthase B from Corynebacterium glutamicum (strain ATCC 13032 / DSM 20300 / JCM 1318 / BCRC 11384 / CCUG 27702 / LMG 3730 / NBRC 12168 / NCIMB 10025 / NRRL B-2784 / 534).